We begin with the raw amino-acid sequence, 189 residues long: Protein Rex (189 aa).

The segment covering 1–16 (MPKTRRRPRRSQRKRP) has biased composition (basic residues). The interval 1–27 (MPKTRRRPRRSQRKRPPTPWPTSQGLD) is disordered. The Nuclear localization signal, and RNA-binding (RxRE) motif lies at 2–18 (PKTRRRPRRSQRKRPPT). Residues 56 to 70 (RPAYIVTPYWPPVQS) form a homomultimerization region. Ser-70 is subject to Phosphoserine; by host. The disordered stretch occupies residues 73-189 (SPGTPSMDAL…PPSPGPSCPT (117 aa)). Residues 80–94 (DALSAQLYSSLSLDS) are compositionally biased toward low complexity. Positions 82–93 (LSAQLYSSLSLD) match the Nuclear export signal motif. Residues 123–131 (PSSRPCANT) are homomultimerization. A compositionally biased stretch (polar residues) spans 143–164 (LGSTSQPCLFQTPDSGPKTCTP). Phosphothreonine; by host is present on Thr-174. At Ser-177 the chain carries Phosphoserine; by host. A compositionally biased stretch (pro residues) spans 178-189 (FPPPSPGPSCPT).

It belongs to the deltaretrovirus Rex protein family. In terms of assembly, homomultimer. Multimeric assembly is essential for activity and involves XPO1. Binds to human XPO1 and KPNB1. Interacts (via N-terminal nuclear localization signal) with human NPM1.

The protein resides in the host nucleus. The protein localises to the host nucleolus. Its subcellular location is the host cytoplasm. Its function is as follows. Rex escorts unspliced gag-pro-pol and singly spliced env mRNAs out of the nucleus of infected cells. These mRNAs carry a recognition sequence called Rex responsive element (RxRE or XRE) located at the 3' region of the long terminal repeat (LTR). This function is essential since most HTLV proteins are translated from unspliced or partially spliced pre-mRNAs that cannot exit the nucleus by the pathway used by fully processed cellular mRNAs. Rex itself is translated from a fully spliced mRNA that probably readily exits the nucleus. Rex's nuclear localization signal (NLS) binds directly to KPNB1/importin beta-1 without previous binding to KPNA1/importin alpha-1. KPNB1 binds to the GDP bound form of RAN (Ran-GDP) and targets Rex to the nucleus. In the nucleus, the conversion from Ran-GDP to Ran-GTP dissociates Rex from KPNB1 and allows Rex's binding to the RRE in viral pre-mRNAs. Rex multimerizes on the RRE via cooperative assembly. This multimerization is critical for its full biological activity, since it may shield the viral RNA from being spliced or down-regulated, and probably exposes Rex's nuclear export signal (NES) to the surface. Rex can then form a complex with XPO1/CRM1, RANBP3 and Ran-GTP, leading to nuclear export of the complex. Conversion from Ran-GTP to Ran-GDP mediates dissociation of the Rex/RRE/XPO1/RANBP3/RAN complex, so that Rex can return to the nucleus for a subsequent round of export. This Human T-cell leukemia virus 1 (strain Japan ATK-1 subtype A) (HTLV-1) protein is Protein Rex.